Reading from the N-terminus, the 227-residue chain is MNSIEFPLLDQKTKNSVISTTLNDLSNWSRLSSLWPLLYGTSCCFIEFASLIGSRFDFDRYGLVPRSSPRQADLILTAGTVTMKMAPSLVRLYEQMPEPKYVIAMGACTITGGMFSTDSYSTVRGVDKLIPVDVYLPGCPPKPEAVIDAITKLRKKISREIDEDPISYQRENRSFTTNHKFDVGRSTHTGNSNQGLFYQPSSISEMTSDTFLKYKKVQYPATNEKVN.

Cys43, Cys44, Cys108, and Cys139 together coordinate [4Fe-4S] cluster.

Belongs to the complex I 20 kDa subunit family. In terms of assembly, NDH is composed of at least 16 different subunits, 5 of which are encoded in the nucleus. [4Fe-4S] cluster serves as cofactor.

The protein resides in the plastid. Its subcellular location is the chloroplast thylakoid membrane. It catalyses the reaction a plastoquinone + NADH + (n+1) H(+)(in) = a plastoquinol + NAD(+) + n H(+)(out). The catalysed reaction is a plastoquinone + NADPH + (n+1) H(+)(in) = a plastoquinol + NADP(+) + n H(+)(out). Functionally, NDH shuttles electrons from NAD(P)H:plastoquinone, via FMN and iron-sulfur (Fe-S) centers, to quinones in the photosynthetic chain and possibly in a chloroplast respiratory chain. It has NADH- and deamino-NADH-specific dehydrogenase activity, using ferricyanide or quinones as acceptors. The immediate electron acceptor for the enzyme in this species is believed to be plastoquinone. Couples the redox reaction to proton translocation, and thus conserves the redox energy in a proton gradient. This is NAD(P)H-quinone oxidoreductase subunit K, chloroplastic from Pisum sativum (Garden pea).